A 546-amino-acid chain; its full sequence is Chaperonin GroEL 2 (546 aa).

ATP is bound by residues 30-33 (TLGP), K51, 87-91 (DGTTT), G415, 479-481 (NAA), and D495.

It belongs to the chaperonin (HSP60) family. Forms a cylinder of 14 subunits composed of two heptameric rings stacked back-to-back. Interacts with the co-chaperonin GroES.

It is found in the cytoplasm. It catalyses the reaction ATP + H2O + a folded polypeptide = ADP + phosphate + an unfolded polypeptide.. Functionally, together with its co-chaperonin GroES, plays an essential role in assisting protein folding. The GroEL-GroES system forms a nano-cage that allows encapsulation of the non-native substrate proteins and provides a physical environment optimized to promote and accelerate protein folding. This chain is Chaperonin GroEL 2, found in Chromobacterium violaceum (strain ATCC 12472 / DSM 30191 / JCM 1249 / CCUG 213 / NBRC 12614 / NCIMB 9131 / NCTC 9757 / MK).